Consider the following 385-residue polypeptide: Probable tRNA sulfurtransferase (385 aa).

A THUMP domain is found at 65–165 (AILQELFSFL…KEHFLVFTER (101 aa)). Residues 183-184 (LL), 208-209 (TF), Arg-267, Gly-285, and Gln-294 contribute to the ATP site.

It belongs to the ThiI family.

It localises to the cytoplasm. It catalyses the reaction [ThiI sulfur-carrier protein]-S-sulfanyl-L-cysteine + a uridine in tRNA + 2 reduced [2Fe-2S]-[ferredoxin] + ATP + H(+) = [ThiI sulfur-carrier protein]-L-cysteine + a 4-thiouridine in tRNA + 2 oxidized [2Fe-2S]-[ferredoxin] + AMP + diphosphate. It carries out the reaction [ThiS sulfur-carrier protein]-C-terminal Gly-Gly-AMP + S-sulfanyl-L-cysteinyl-[cysteine desulfurase] + AH2 = [ThiS sulfur-carrier protein]-C-terminal-Gly-aminoethanethioate + L-cysteinyl-[cysteine desulfurase] + A + AMP + 2 H(+). It functions in the pathway cofactor biosynthesis; thiamine diphosphate biosynthesis. Its function is as follows. Catalyzes the ATP-dependent transfer of a sulfur to tRNA to produce 4-thiouridine in position 8 of tRNAs, which functions as a near-UV photosensor. Also catalyzes the transfer of sulfur to the sulfur carrier protein ThiS, forming ThiS-thiocarboxylate. This is a step in the synthesis of thiazole, in the thiamine biosynthesis pathway. The sulfur is donated as persulfide by IscS. The sequence is that of Probable tRNA sulfurtransferase from Mycoplasma genitalium (strain ATCC 33530 / DSM 19775 / NCTC 10195 / G37) (Mycoplasmoides genitalium).